We begin with the raw amino-acid sequence, 363 residues long: MSGNTYGKLFTVTTAGESHGPALVAIVDGCPPGLELTLEDLQRDLDRRKPGTSRHTTQRQEPDEVEILSGVFEGKTTGCSIGLLIRNTDQKSKDYSAIKDLFRPAHADYSYHHKYGIRDYRGGGRSSARETAMRVAAGAIAKKYLASQGIVIRGYMSQLGPIEIPFKTWDSVENNAFFSPDPDKVAELEAYMDQLRRDQDSVGAKITVVAEGVMPGLGEPIFDRLDAELAHALMSINAVKGVEIGAGFACVAQRGTEHRDELTPQGFLSNNAGGILGGISSGQPIVAHLALKPTSSITTPGRSIDIDGNPVDVITKGRHDPCVGIRATPIAEAMMAIVLMDHLLRHRGQNADVRVSTPVLGQL.

Positions 44 to 63 are disordered; the sequence is DLDRRKPGTSRHTTQRQEPD. Positions 48 and 54 each coordinate NADP(+). FMN contacts are provided by residues 125–127, 237–238, glycine 277, 292–296, and arginine 318; these read RSS, NA, and KPTSS.

Belongs to the chorismate synthase family. Homotetramer. FMNH2 serves as cofactor.

The enzyme catalyses 5-O-(1-carboxyvinyl)-3-phosphoshikimate = chorismate + phosphate. It functions in the pathway metabolic intermediate biosynthesis; chorismate biosynthesis; chorismate from D-erythrose 4-phosphate and phosphoenolpyruvate: step 7/7. In terms of biological role, catalyzes the anti-1,4-elimination of the C-3 phosphate and the C-6 proR hydrogen from 5-enolpyruvylshikimate-3-phosphate (EPSP) to yield chorismate, which is the branch point compound that serves as the starting substrate for the three terminal pathways of aromatic amino acid biosynthesis. This reaction introduces a second double bond into the aromatic ring system. The sequence is that of Chorismate synthase from Pseudomonas fluorescens (strain ATCC BAA-477 / NRRL B-23932 / Pf-5).